Consider the following 127-residue polypeptide: Large ribosomal subunit protein bL17 (127 aa).

The protein belongs to the bacterial ribosomal protein bL17 family. In terms of assembly, part of the 50S ribosomal subunit. Contacts protein L32.

This chain is Large ribosomal subunit protein bL17, found in Legionella pneumophila (strain Paris).